The primary structure comprises 444 residues: Mitogen-activated protein kinase mpk-1 (444 aa).

2 stretches are compositionally biased toward polar residues: residues M1–N17 and G24–Q56. The disordered stretch occupies residues M1–Q56. The region spanning Y96–L384 is the Protein kinase domain. ATP is bound by residues I102–V110 and K125. D220 (proton acceptor) is an active-site residue. T256 is subject to Phosphothreonine. The TXY motif lies at T256–Y258. Y258 bears the Phosphotyrosine mark.

The protein belongs to the protein kinase superfamily. CMGC Ser/Thr protein kinase family. MAP kinase subfamily. In terms of assembly, isoform a interacts with gck-1 (via N-terminus). The cofactor is Mg(2+). Post-translationally, isoform a is phosphorylated at the pachytene stage during oogenesis and is negatively regulated by gck-1. Isoform b is phosphorylated in proximal oocytes. As to expression, expressed in cells lining the rectum. Isoform a is expressed in nervous system, body wall muscles and posterior intestine. Isoform b expression may be restricted to germline.

It carries out the reaction L-seryl-[protein] + ATP = O-phospho-L-seryl-[protein] + ADP + H(+). It catalyses the reaction L-threonyl-[protein] + ATP = O-phospho-L-threonyl-[protein] + ADP + H(+). Activated by dual phosphorylation at Thr-256 and Tyr-258. May be inactivated by lip-1-mediated dephosphorylation. In terms of biological role, functions in let-60 Ras signaling pathway; acts downstream of lin-45 raf kinase, but before the lin-1 gene product in controlling vulval cell differentiation. Plays a negative role in proximal germline proliferation in the mitotic zone. Required for progression of developing oocytes through the pachytene stage, perhaps acting after efl-1/dpl-1-mediated gene activation and before gld-1 down-regulation. May play a role in global X chromosome reactivation or be indirectly required for progression of germ cells through meiosis to the point where X reactivation occurs. In oocytes, inhibits the activity of the chloride channel clh-3, likely by activating gck-3. Plays a role in response to M.nematophilum-mediated bacterial infection by promoting tail swelling and preventing constipation. Involved in fluid homeostasis. In addition, involved in the up-regulation of lysozyme ilys-3 expression in the intestine in responses to M.nematophilum-mediated bacterial infection. By phosphorylating transcription factor skn-1 (isoform c) may play a role in increasing life span downstream of lin-45, let-60 and mek-2. By up-regulating cep-1 and down-regulating gld-1 expression in the late pachytene stage, plays a role in germline apoptosis in response to DNA damage. Regulates egl-1 expression in response to DNA damage, probably upstream of cep-1. Its function is as follows. Suppresses germline tumor formation by preventing the dedifferentiation of secondary spermatocytes probably upstream of rskn-1. In Caenorhabditis elegans, this protein is Mitogen-activated protein kinase mpk-1 (mpk-1).